A 338-amino-acid chain; its full sequence is Electron transfer flavoprotein subunit alpha (338 aa).

Isoleucine 275–aspartate 303 serves as a coordination point for FAD.

The protein belongs to the ETF alpha-subunit/FixB family. Heterodimer of an alpha and a beta subunit. FAD is required as a cofactor.

Functionally, the electron transfer flavoprotein serves as a specific electron acceptor for other dehydrogenases. It transfers the electrons to the main respiratory chain via ETF-ubiquinone oxidoreductase (ETF dehydrogenase). In Megasphaera elsdenii, this protein is Electron transfer flavoprotein subunit alpha (etfA).